The sequence spans 338 residues: Probable tRNA pseudouridine synthase B (338 aa).

The active-site Nucleophile is the D78. The PUA domain maps to 245–320; that stretch reads LPKIILRDSA…LAATSVRIMM (76 aa).

This sequence belongs to the pseudouridine synthase TruB family. Type 2 subfamily.

It catalyses the reaction uridine(55) in tRNA = pseudouridine(55) in tRNA. Could be responsible for synthesis of pseudouridine from uracil-55 in the psi GC loop of transfer RNAs. In Methanosarcina barkeri (strain Fusaro / DSM 804), this protein is Probable tRNA pseudouridine synthase B.